We begin with the raw amino-acid sequence, 381 residues long: Guanine nucleotide-binding protein G(s) subunit alpha (381 aa).

Residue Cys3 is the site of S-palmitoyl cysteine attachment. One can recognise a G-alpha domain in the interval 36 to 381; it reads ALHRLLLLGA…RMHLQKYELL (346 aa). Residues 39-52 are G1 motif; it reads RLLLLGAGESGKST. GTP contacts are provided by residues 44–51, 183–189, 208–212, 277–280, and Ala353; these read GAGESGKS, LRCRVLT, GVGGQ, and NKQD. Mg(2+)-binding residues include Ser51 and Thr189. The G2 motif stretch occupies residues 181-189; the sequence is DILRCRVLT. Residues 204–213 are G3 motif; that stretch reads FYMFGVGGQR. The G4 motif stretch occupies residues 273-280; that stretch reads ILFLNKQD. Residues 351–356 form a G5 motif region; it reads TTAVDT.

This sequence belongs to the G-alpha family. G(s) subfamily. As to quaternary structure, g proteins are composed of 3 units; alpha, beta and gamma. The alpha chain contains the guanine nucleotide binding site.

Its function is as follows. Guanine nucleotide-binding proteins (G proteins) are involved as modulators or transducers in various transmembrane signaling systems. The G(s) protein is involved in hormonal regulation of adenylate cyclase: it activates the cyclase in response to beta-adrenergic stimuli. The sequence is that of Guanine nucleotide-binding protein G(s) subunit alpha from Geodia cydonium (Sponge).